A 319-amino-acid polypeptide reads, in one-letter code: tRNA dimethylallyltransferase (319 aa).

Position 15–22 (15–22) interacts with ATP; sequence GPTASGKS. 17–22 serves as a coordination point for substrate; sequence TASGKS. Interaction with substrate tRNA regions lie at residues 40-43 and 164-168; these read DSRQ and QRLVR.

The protein belongs to the IPP transferase family. In terms of assembly, monomer. Mg(2+) is required as a cofactor.

It carries out the reaction adenosine(37) in tRNA + dimethylallyl diphosphate = N(6)-dimethylallyladenosine(37) in tRNA + diphosphate. In terms of biological role, catalyzes the transfer of a dimethylallyl group onto the adenine at position 37 in tRNAs that read codons beginning with uridine, leading to the formation of N6-(dimethylallyl)adenosine (i(6)A). This chain is tRNA dimethylallyltransferase, found in Chlorobium phaeobacteroides (strain DSM 266 / SMG 266 / 2430).